A 283-amino-acid chain; its full sequence is MNTVKTVRELRAAVARARSEGKRIGFVPTMGNLHAGHAALVKKAGERADFVVVSIFVNPLQFGPSEDLDTYPRTLAADQERLLEAGCHLLFTPTVEEMYPDGMDGQTRIHVPGVSEGLCGASRPGHFEGVATVVSKLLNMVQPDLALFGEKDFQQLAVIRKLVRDLNLPVQIFGEPTVRAADGLALSSRNGYLDEQQRAAAPAIYRTLRQLGERIRAGAEDFPALLADARQALEQAGLRPDYLEIREPISLRPGVPGDRQLVILAAAYLGSTRLIDNLSVHLD.

30–37 (MGNLHAGH) contributes to the ATP binding site. His37 serves as the catalytic Proton donor. Gln61 is a (R)-pantoate binding site. Residue Gln61 coordinates beta-alanine. 149–152 (GEKD) is a binding site for ATP. Gln155 is a (R)-pantoate binding site. ATP contacts are provided by residues Val178 and 186-189 (LSSR).

The protein belongs to the pantothenate synthetase family. As to quaternary structure, homodimer.

The protein resides in the cytoplasm. The enzyme catalyses (R)-pantoate + beta-alanine + ATP = (R)-pantothenate + AMP + diphosphate + H(+). The protein operates within cofactor biosynthesis; (R)-pantothenate biosynthesis; (R)-pantothenate from (R)-pantoate and beta-alanine: step 1/1. Functionally, catalyzes the condensation of pantoate with beta-alanine in an ATP-dependent reaction via a pantoyl-adenylate intermediate. This is Pantothenate synthetase from Pseudomonas aeruginosa (strain UCBPP-PA14).